The sequence spans 689 residues: MVKHIWDSERAAQLPKGVEELVYRSNLIGSDRTVCNWGGGNTSMKTTEKDFRGREIEVMWVKGSGSDLATMKAHNFSGLKLDDIRPLIKRDQMPDEEMVDYLSHCMIDSKHPRPSIETLLHAFLPYKHVDHTHPDAIISICCADNGKQIAEDIYGNRFVWVPYVRPGFTLSKMIAEGVANNPHAELVLMEKHGLVTWGETSETCYQKTISIIQEAEQYINDRINQHEVFGGKRYQPLPEDKRKQILAGIMPVIRGAVSEEKKMILSYDDHDDVLEFVNSVQAPALSQIGAACPDHLVHTKRVPLYIDWNPETQDVHKLADLIKSGVETFTSEYQAYFTRNQQDGDQIFESAPRVILIPGIGMVNTGKSYAMSKVSGALYRRAIAVMKGATALGQFVSLHENESYHVEYWPLELYKLTLAPPEAEFSRKVALITGGAGGIGSAACRRFAAEGGHVIVADLNIEGAQKIAGEINDAYGKGRAMAVKMDVTKEEDVQSAFERAALAYGGIDIVVNNAGLATSSPFDETSLKEWNLNMNVLGTGYFLVAREAFKQMKHQNRGGSMVFVGSKNSVYAGKNASAYSSVKALETHLARCIAAEGGEFGIRVNSVLPDAVLQGSAIWGSSWREERAAAYGIEPDQLEEHYRKRTALLVNIYPEDIAEAIAFFASSKAEKTTGCMITVDGGVPAAFTR.

Substrate is bound at residue Ser566. The active-site Proton acceptor is the Tyr579.

The protein belongs to the short-chain dehydrogenases/reductases (SDR) family.

This is an uncharacterized protein from Bacillus subtilis (strain 168).